Here is a 501-residue protein sequence, read N- to C-terminus: MAINAQEISALIKQQIENFKPNFDVTETGVVTYIGDGIARAHGLENVMSGELLNFENGSYGMAQNLESTDVGIIILGDFTDIREGDTIRRTGKIMEVPVGESLIGRVVDPLGRPVDGLGEIHTDKTRPVEAPAPGVMQRKSVSEPLQTGLKAIDALVPIGRGQRELIIGDRQTGKTTIAIDTILNQKDQDMICIYVAIGQKESTVRTQVETLRQYGALDYTIVVTASASQPSPLLFLAPYAGVAMAEEFMYQGKHVLIVYDDLSKQAVAYRELSLLLRRPPGREAFPGDVFYLHSRLLERSAKVSDELGGGSITALPFIETQAGDISAYIATNVISITDGQIFLGDGLFNAGIRPAIDAGSSVSRVGGSAQIKAMKKVAGTLRIDLASYRELEAFTKFGSDLDAATQAKLNRGRRTVEVLKQPVHKPLPVEKQVTILYALTHGFLDTVPVDDIVRFEEEFHAFFDAQHPEILETIRDTKDLPEEAVLDAAITEFLNQSSFQ.

Position 169–176 (169–176 (GDRQTGKT)) interacts with ATP.

The protein belongs to the ATPase alpha/beta chains family. F-type ATPases have 2 components, CF(1) - the catalytic core - and CF(0) - the membrane proton channel. CF(1) has five subunits: alpha(3), beta(3), gamma(1), delta(1), epsilon(1). CF(0) has three main subunits: a(1), b(2) and c(9-12). The alpha and beta chains form an alternating ring which encloses part of the gamma chain. CF(1) is attached to CF(0) by a central stalk formed by the gamma and epsilon chains, while a peripheral stalk is formed by the delta and b chains.

It is found in the cell membrane. The catalysed reaction is ATP + H2O + 4 H(+)(in) = ADP + phosphate + 5 H(+)(out). In terms of biological role, produces ATP from ADP in the presence of a proton gradient across the membrane. The alpha chain is a regulatory subunit. The protein is ATP synthase subunit alpha of Streptococcus pneumoniae serotype 4 (strain ATCC BAA-334 / TIGR4).